The chain runs to 150 residues: Putative pre-16S rRNA nuclease (150 aa).

It belongs to the YqgF nuclease family.

The protein localises to the cytoplasm. Functionally, could be a nuclease involved in processing of the 5'-end of pre-16S rRNA. The protein is Putative pre-16S rRNA nuclease of Chlamydia felis (strain Fe/C-56) (Chlamydophila felis).